We begin with the raw amino-acid sequence, 357 residues long: MLSLQTLAKKVVACNYLSSDYDYTLQRFGLWWDLGPIHLCNTCKQIFSYKHLQCFSEDDLCLEAALVKAVKSDNLELIRLFVDWGANPEYGLIRVPAVHLKRLCMELGGLTPVSESRLLEILKEVADLKSCAGVLLGYDMFCHNPLLETVTRTTLDTVMYTRSKIPLTGDTAHLLLSKFWFALALRHNFTKAIHYFYEKHKNQLYWRLTCSLYFNNIFDLHELCCKKEICISPNLMMKFACLREENYAAIYYCHMLGASLDYGMNLSIYNNNTLNLFFCIDLGATNFDRARLIARRVYMYNLSNLFLVKQLFSRDVSLILDLTEPQAIYDMLNTYTSKNLKQAEEYFTAHPEIVVID.

Belongs to the asfivirus MGF 360 family. In terms of assembly, interacts with host IRF3 and TRIM21; these interactions mediates degradation of IRF3 through TRIM21 and ubiquitin-meditated proteolysis.

It localises to the host cytoplasm. In terms of biological role, plays a role in virus cell tropism, and may be required for efficient virus replication in macrophages. Also inhibits the host cGAS/STING-mediated type I interferon production by inducing host IRF3 degradation through the proteasome pathway. The sequence is that of Protein MGF 360-14L from Ornithodoros (relapsing fever ticks).